We begin with the raw amino-acid sequence, 221 residues long: GTP-binding nuclear protein Ran-B1 (221 aa).

Positions 10 to 174 (DYPSFKLVIV…LYLARKLAGD (165 aa)) constitute a Small GTPase Ran-type domain. A GTP-binding site is contributed by 21 to 28 (DGGTGKTT). The tract at residues 40–48 (KKYEPTIGV) is switch-I. GTP contacts are provided by residues Gly-71, 125-128 (NKVD), and 153-155 (SAK). The switch-II stretch occupies residues 71-87 (GQEKFGGLRDGYYIHGQ).

This sequence belongs to the small GTPase superfamily. Ran family. As to quaternary structure, found in a nuclear export complex with RanGTP, exportin and pre-miRNA.

It localises to the nucleus. Functionally, GTP-binding protein involved in nucleocytoplasmic transport. Required for the import of protein into the nucleus and also for RNA export. Involved in chromatin condensation and control of cell cycle. This is GTP-binding nuclear protein Ran-B1 (RAN-B1) from Nicotiana tabacum (Common tobacco).